Here is a 394-residue protein sequence, read N- to C-terminus: Elongation factor Tu (394 aa).

The region spanning 10–204 is the tr-type G domain; that stretch reads RTHINVGTIG…ILDNYIPEPK (195 aa). The segment at 19–26 is G1; that stretch reads GHVDHGKT. A GTP-binding site is contributed by 19 to 26; sequence GHVDHGKT. Thr-26 contributes to the Mg(2+) binding site. A G2 region spans residues 60 to 64; sequence GITIN. Positions 81–84 are G3; the sequence is DCPG. Residues 81–85 and 136–139 each bind GTP; these read DCPGH and NKCD. Residues 136 to 139 form a G4 region; the sequence is NKCD. Residues 174–176 are G5; the sequence is SAL.

The protein belongs to the TRAFAC class translation factor GTPase superfamily. Classic translation factor GTPase family. EF-Tu/EF-1A subfamily. In terms of assembly, monomer.

It is found in the cytoplasm. It catalyses the reaction GTP + H2O = GDP + phosphate + H(+). Its function is as follows. GTP hydrolase that promotes the GTP-dependent binding of aminoacyl-tRNA to the A-site of ribosomes during protein biosynthesis. The protein is Elongation factor Tu of Blochmanniella floridana.